Consider the following 347-residue polypeptide: Trace amine-associated receptor 4 (347 aa).

Residues 1 to 37 are Extracellular-facing; it reads MNTPDPWSSPEVQFCFAAANSSCPRKARPALVVCAMY. N20 carries an N-linked (GlcNAc...) asparagine glycan. 2 disulfides stabilise this stretch: C23–C187 and C106–C191. Residues 38-58 form a helical membrane-spanning segment; that stretch reads LIMIGAIVMTMLGNMAVIISI. The Cytoplasmic segment spans residues 59–69; sequence AHFKQLHSPTN. A helical transmembrane segment spans residues 70-90; that stretch reads FLILSMATTDFLLSCVVMPFS. Topologically, residues 91 to 110 are extracellular; the sequence is MIRSIESCWYFGDLFCKVHS. Residues 111-129 form a helical membrane-spanning segment; it reads CCDIMLCTTSIFHLCFISV. Topologically, residues 130–149 are cytoplasmic; it reads DRHYAVCDPLHYVTQITTRV. Residues 150-170 form a helical membrane-spanning segment; sequence VGVFLLISWSVPIFFAFGLVF. Topologically, residues 171–197 are extracellular; sequence SELNLIGAEDFVAAIDCTGLCVLIFNK. Residues 175-188 form an extracellular Loop 2 (ECL2) region; that stretch reads LIGAEDFVAAIDCT. The helical transmembrane segment at 198–218 threads the bilayer; sequence LWGVLASFIAFFLPGTVMVGI. Topologically, residues 219–260 are cytoplasmic; sequence YIHIFTVAQKHARQIGTGPRTKQALSESKMKATSKKESKATK. The helical transmembrane segment at 261-281 threads the bilayer; it reads TLSIVMGVFVLCWLPFFVLTI. Residues 282 to 296 are Extracellular-facing; it reads TDPFIDFTTPEDLYN. Residues 297-317 form a helical membrane-spanning segment; that stretch reads VFLWLGYFNSTFNPIIYGMFY. The Cytoplasmic segment spans residues 318–347; the sequence is PWFRKALRMIVTGTIFRSDSSTSSLHPAHP.

It belongs to the G-protein coupled receptor 1 family. As to expression, specifically expressed in neurons of the olfactory epithelium, to discrete glomeruli predominantly localized to a confined bulb region. Present in the dorsal area of the main olfactory epithelium.

It localises to the cell membrane. In terms of biological role, olfactory receptor specific for 2-phenylethylamine, a trace amine present at high concentration in the urine of carnivore species, playing a key role in fear and avoidance responses. 2-phenylethylamine acts as a kairomone in the chemical detection of carnivore odor and triggers fear in mice. This receptor is probably mediated by the G(s)-class of G-proteins which activate adenylate cyclase. This is Trace amine-associated receptor 4 from Mus musculus (Mouse).